Reading from the N-terminus, the 530-residue chain is Estrogen receptor beta (530 aa).

The modulating stretch occupies residues 1–148 (MEIKNSPSSL…SPNAKRDAHF (148 aa)). Residue Ser61 is modified to Phosphoserine; alternate. An O-linked (GlcNAc) serine; alternate glycan is attached at Ser61. Phosphoserine; by MAPK occurs at positions 87 and 105. NR C4-type zinc fingers lie at residues 149-169 (CPVC…CEGC) and 185-209 (CPAT…LRKC). The segment at residues 149-214 (CPVCSDYASG…RLRKCYEVGM (66 aa)) is a DNA-binding region (nuclear receptor). In terms of domain architecture, NR LBD spans 264-498 (SPEQLVLTLL…DLLLEMLNAH (235 aa)). Residues 506 to 515 (SISGSECSST) are compositionally biased toward low complexity. Positions 506–530 (SISGSECSSTEDSKNKESSQNLQSQ) are disordered.

It belongs to the nuclear hormone receptor family. NR3 subfamily. Binds DNA as a homodimer. Can form a heterodimer with ESR1. Interacts with NCOA1, NCOA3, NCOA5 and NCOA6 coactivators, leading to a strong increase of transcription of target genes. Interacts with UBE1C and AKAP13. Interacts with DNTTIP2. Interacts with CCDC62 in the presence of estradiol/E2; this interaction seems to enhance the transcription of target genes. Interacts with PRMT2. Interacts with CCAR2 (via N-terminus) in a ligand-independent manner. Interacts with DNAAF4. Interacts with RBM39, in the presence of estradiol (E2). Interacts with STUB1/CHIP. Phosphorylation at Ser-87 and Ser-105 recruits NCOA1. In terms of tissue distribution, expressed in the CA1 region of the hippocampus, expression decreases with age (at protein level). Expressed in prostate, ovary, lung, liver, kidney, fat, bone, brain, uterus and testis.

It localises to the nucleus. Functionally, nuclear hormone receptor. Binds estrogens with an affinity similar to that of ESR1/ER-alpha, and activates expression of reporter genes containing estrogen response elements (ERE) in an estrogen-dependent manner. In terms of biological role, lacks ligand binding affinity and suppresses ESR1/ER-alpha and ESR2 isoform 1/ER-beta1 mediated transcriptional activation and may act as a dominant negative regulator of estrogen action. Unable to bind DNA and activate transcription due to the truncation of the DNA binding domain. This is Estrogen receptor beta (Esr2) from Rattus norvegicus (Rat).